The primary structure comprises 315 residues: WD repeat domain-containing protein 83 (315 aa).

7 WD repeats span residues 23–62 (CSQG…LLRT), 65–104 (GHGY…VVRK), 107–146 (GHAG…PEPV), 151–188 (EARD…VSSD), 190–228 (VGSP…LLGE), 231–272 (GHKN…LALA), and 275–313 (VGSN…AEGG).

Belongs to the WD repeat MORG1 family. In terms of assembly, interacts with EGLN3/PHD3. Interacts with ERK signaling proteins MAP2K1/MEK1, MAP2K2/MEK2, LAMTOR3, ARAF/Raf-1, MAPK1/ERK2 and MAPK3/ERK1. Identified in the spliceosome C complex. Interacts with PARD6B and CRB3. Interacts strongly with GTP-bound RRAGA but not with inactive GDP-bound. Interacts with p62/SQSTM1. As to expression, ubiquitous.

It localises to the cytoplasm. It is found in the lysosome. The protein resides in the nucleus. Molecular scaffold protein for various multimeric protein complexes. Acts as a module in the assembly of a multicomponent scaffold for the ERK pathway, linking ERK responses to specific agonists. At low concentrations it enhances ERK activation, whereas high concentrations lead to the inhibition of ERK activation. Also involved in response to hypoxia by acting as a negative regulator of HIF1A/HIF-1-alpha via its interaction with EGLN3/PHD3. May promote degradation of HIF1A. May act by recruiting signaling complexes to a specific upstream activator. May also be involved in pre-mRNA splicing. Participates in tight junction development by regulating apico-basal polarity, a key step in tissue development and organization. Mechanistically, regulates the translocation of PAR6-aPKC from the cytoplasm to the apical surface by acting as an adapter between PARD6B AND CRB3. Also acts as a negative regulator of mTORC1 under nutrient-rich conditions by binding to the active Rag GTPases to inhibit mTORC1 localization to the lysosome and phosphorylation of downstream targets. This facilitates constitutive basal autophagy during nutrient availability. This chain is WD repeat domain-containing protein 83 (Wdr83), found in Mus musculus (Mouse).